Consider the following 933-residue polypeptide: C-1-tetrahydrofolate synthase, cytoplasmic (933 aa).

The segment at 1-303 (MWEPQGSLDP…DRLLAPTWPL (303 aa)) is methylenetetrahydrofolate dehydrogenase and cyclohydrolase. Substrate-binding positions include 51-55 (YIRMK) and 98-100 (VQM). Residues 170-172 (GRS) and Ser-195 each bind NADP(+). 270–274 (PGGVG) serves as a coordination point for substrate. The formyltetrahydrofolate synthetase stretch occupies residues 304-933 (RPLRITPLSP…TKTGEIEGLF (630 aa)). Residue 378–385 (TPLGEGKS) participates in ATP binding.

This sequence in the N-terminal section; belongs to the tetrahydrofolate dehydrogenase/cyclohydrolase family. In the C-terminal section; belongs to the formate--tetrahydrofolate ligase family. As to quaternary structure, homodimer.

Its subcellular location is the cytoplasm. The catalysed reaction is (6R)-5,10-methylene-5,6,7,8-tetrahydrofolate + NADP(+) = (6R)-5,10-methenyltetrahydrofolate + NADPH. It carries out the reaction (6R)-5,10-methenyltetrahydrofolate + H2O = (6R)-10-formyltetrahydrofolate + H(+). It catalyses the reaction (6S)-5,6,7,8-tetrahydrofolate + formate + ATP = (6R)-10-formyltetrahydrofolate + ADP + phosphate. Its pathway is one-carbon metabolism; tetrahydrofolate interconversion. The sequence is that of C-1-tetrahydrofolate synthase, cytoplasmic from Spodoptera frugiperda (Fall armyworm).